Reading from the N-terminus, the 129-residue chain is Small ribosomal subunit protein uS11 (129 aa).

The disordered stretch occupies residues 108 to 129; the sequence is EDVTPIPHDGTKPKGGKRGRRV.

It belongs to the universal ribosomal protein uS11 family. Part of the 30S ribosomal subunit.

Located on the platform of the 30S subunit. This Methanothrix thermoacetophila (strain DSM 6194 / JCM 14653 / NBRC 101360 / PT) (Methanosaeta thermophila) protein is Small ribosomal subunit protein uS11.